We begin with the raw amino-acid sequence, 131 residues long: uncharacterized protein (131 aa).

This is an uncharacterized protein from Mycobacterium tuberculosis (strain CDC 1551 / Oshkosh).